Reading from the N-terminus, the 409-residue chain is Dihydrolipoyllysine-residue succinyltransferase component of 2-oxoglutarate dehydrogenase complex (409 aa).

In terms of domain architecture, Lipoyl-binding spans 2–77 (AIEIKAPTFP…LSNELLGKLN (76 aa)). Residue K43 is modified to N6-lipoyllysine. A Peripheral subunit-binding (PSBD) domain is found at 112-149 (ILSPAARKLAEEAGIDPNSIAGTGKGGRVTKEDVVAAV). Active-site residues include H380 and D384.

It belongs to the 2-oxoacid dehydrogenase family. Forms a 24-polypeptide structural core with octahedral symmetry. Part of the 2-oxoglutarate dehydrogenase (OGDH) complex composed of E1 (2-oxoglutarate dehydrogenase), E2 (dihydrolipoamide succinyltransferase) and E3 (dihydrolipoamide dehydrogenase); the complex contains multiple copies of the three enzymatic components (E1, E2 and E3). (R)-lipoate serves as cofactor.

The enzyme catalyses N(6)-[(R)-dihydrolipoyl]-L-lysyl-[protein] + succinyl-CoA = N(6)-[(R)-S(8)-succinyldihydrolipoyl]-L-lysyl-[protein] + CoA. It functions in the pathway amino-acid degradation; L-lysine degradation via saccharopine pathway; glutaryl-CoA from L-lysine: step 6/6. Functionally, E2 component of the 2-oxoglutarate dehydrogenase (OGDH) complex which catalyzes the second step in the conversion of 2-oxoglutarate to succinyl-CoA and CO(2). The polypeptide is Dihydrolipoyllysine-residue succinyltransferase component of 2-oxoglutarate dehydrogenase complex (sucB) (Pseudomonas aeruginosa (strain ATCC 15692 / DSM 22644 / CIP 104116 / JCM 14847 / LMG 12228 / 1C / PRS 101 / PAO1)).